Reading from the N-terminus, the 122-residue chain is Large ribosomal subunit protein uL18 (122 aa).

The protein belongs to the universal ribosomal protein uL18 family. As to quaternary structure, part of the 50S ribosomal subunit; part of the 5S rRNA/L5/L18/L25 subcomplex. Contacts the 5S and 23S rRNAs.

Functionally, this is one of the proteins that bind and probably mediate the attachment of the 5S RNA into the large ribosomal subunit, where it forms part of the central protuberance. The sequence is that of Large ribosomal subunit protein uL18 from Syntrophotalea carbinolica (strain DSM 2380 / NBRC 103641 / GraBd1) (Pelobacter carbinolicus).